Consider the following 311-residue polypeptide: GTPase Era (311 aa).

The Era-type G domain occupies 16–188 (HAGFVAIVGK…REQLLEVLPE (173 aa)). Residues 24–31 (GKPNVGKS) form a G1 region. 24-31 (GKPNVGKS) contacts GTP. Positions 50-54 (QTTRR) are G2. The interval 71-74 (DTPG) is G3. Residues 71–75 (DTPGL) and 133–136 (NKTD) contribute to the GTP site. Residues 133 to 136 (NKTD) form a G4 region. The segment at 166 to 168 (LSA) is G5. Residues 219–296 (LRDELPYAVA…YLGLEVIVIP (78 aa)) form the KH type-2 domain.

Belongs to the TRAFAC class TrmE-Era-EngA-EngB-Septin-like GTPase superfamily. Era GTPase family. Monomer.

It is found in the cytoplasm. Its subcellular location is the cell membrane. An essential GTPase that binds both GDP and GTP, with rapid nucleotide exchange. Plays a role in 16S rRNA processing and 30S ribosomal subunit biogenesis and possibly also in cell cycle regulation and energy metabolism. This chain is GTPase Era, found in Deinococcus radiodurans (strain ATCC 13939 / DSM 20539 / JCM 16871 / CCUG 27074 / LMG 4051 / NBRC 15346 / NCIMB 9279 / VKM B-1422 / R1).